Consider the following 448-residue polypeptide: SET domain-containing protein SmydA-8, isoform B (448 aa).

One can recognise an SET domain in the interval 42 to 273 (PSWRVADSPI…AGAEITMSYA (232 aa)).

It belongs to the class V-like SAM-binding methyltransferase superfamily.

This chain is SET domain-containing protein SmydA-8, isoform B, found in Drosophila melanogaster (Fruit fly).